A 41-amino-acid chain; its full sequence is Large ribosomal subunit protein bL36 (41 aa).

Belongs to the bacterial ribosomal protein bL36 family.

In Paracoccus denitrificans (strain Pd 1222), this protein is Large ribosomal subunit protein bL36.